The sequence spans 720 residues: DNA helicase II (720 aa).

One can recognise a UvrD-like helicase ATP-binding domain in the interval 8–286 (DSLNDKQREA…IRLEQNYRST (279 aa)). Residues 32 to 37 (GSGKTR) and Arg284 each bind ATP. In terms of domain architecture, UvrD-like helicase C-terminal spans 287 to 564 (SNILSAANAL…QLMTLHSAKG (278 aa)).

It belongs to the helicase family. UvrD subfamily.

It carries out the reaction Couples ATP hydrolysis with the unwinding of duplex DNA by translocating in the 3'-5' direction.. The catalysed reaction is ATP + H2O = ADP + phosphate + H(+). Functionally, a helicase with DNA-dependent ATPase activity. Unwinds DNA duplexes with 3'-5' polarity. Translocates on single-stranded DNA with 3'-5' polarity. Initiates unwinding more efficiently from a nicked substrate than double-stranded DNA. Involved in the post-incision events of nucleotide excision repair and methyl-directed mismatch repair, and probably also in repair of alkylated DNA. This chain is DNA helicase II, found in Escherichia coli (strain K12).